The sequence spans 82 residues: Precursor of CEP3 (82 aa).

Positions methionine 1–glycine 24 are cleaved as a signal peptide. A propeptide spanning residues arginine 25 to aspartate 63 is cleaved from the precursor. A disordered region spans residues alanine 40–asparagine 82. Proline 67, proline 70, and proline 74 each carry hydroxyproline. Positions serine 79 to asparagine 82 are excised as a propeptide.

This sequence belongs to the C-terminally encoded plant signaling peptide (CEP) family. As to quaternary structure, interacts with the CEP receptor CEPR1. The mature small signaling peptide is generated by proteolytic processing of the longer precursor. In terms of tissue distribution, mostly expressed in roots. Present in lateral roots (especially in vasculature), root-hypocotyl junction and cotyledons.

The protein localises to the secreted. It localises to the extracellular space. Its subcellular location is the apoplast. Extracellular signaling peptide that represses primary root growth rate and significantly inhibits lateral root formation. Promotes shoot growth. Modulates leaf morphology. Regulates systemic nitrogen (N)-demand signaling. Mediates systemic up-regulation of genes involved in N uptake and assimilation pathways. The sequence is that of Precursor of CEP3 from Arabidopsis thaliana (Mouse-ear cress).